Reading from the N-terminus, the 31-residue chain is MSDINTARLPCIGFLGIPSVGDDIEMVLRHG.

A propeptide spanning residues 1-10 is cleaved from the precursor; the sequence is MSDINTARLP. The segment at residues 11–18 is a cross-link (cyclopeptide (Cys-Pro)); that stretch reads CIGFLGIP. Residues 19 to 31 constitute a propeptide that is removed on maturation; the sequence is SVGDDIEMVLRHG.

Belongs to the MSDIN fungal toxin family. Processed by the macrocyclase-peptidase enzyme POPB to yield a toxic cyclic octapeptide. POPB first removes 10 residues from the N-terminus. Conformational trapping of the remaining peptide forces the enzyme to release this intermediate rather than proceed to macrocyclization. The enzyme rebinds the remaining peptide in a different conformation and catalyzes macrocyclization of the N-terminal 8 residues.

Probable toxin that belongs to the MSDIN-like toxin family responsible for a large number of food poisoning cases and deaths. This Amanita bisporigera (Destroying angel) protein is MSDIN-like toxin proprotein 8.